A 293-amino-acid chain; its full sequence is G1/S-specific cyclin-D3 (293 aa).

The region spanning 27–152 (VLQSLLRLEE…LVLGKLKWDL (126 aa)) is the Cyclin N-terminal domain. The interval 257–293 (REAAQTAPSPVPKAPGGSSSQGPSQTSTPTDVTAIHL) is disordered. Residues Ser265 and Ser280 each carry the phosphoserine modification. Residues 271-286 (PGGSSSQGPSQTSTPT) show a composition bias toward low complexity. The residue at position 284 (Thr284) is a Phosphothreonine.

Belongs to the cyclin family. Cyclin D subfamily. Interacts with the CDK4 and CDK6 protein kinases to form a serine/threonine kinase holoenzyme complex. The cyclin subunit imparts substrate specificity to the complex. Interacts with ATF5. Interacts with EIF3K. Component of the ternary complex cyclin D/CDK4/CDKN1B required for nuclear translocation and modulation of CDK4-mediated kinase activity. Can form similar complexes with either CDKN1A or CDKN2A. Phosphorylation at Thr-284 by MAP kinases is required for ubiquitination and degradation by the DCX(AMBRA1) complex. Post-translationally, ubiquitinated by the DCX(AMBRA1) complex during the transition from G1 to S cell phase, leading to its degradation: ubiquitination is dependent on Thr-284 phosphorylation. The DCX(AMBRA1) complex represents the major regulator of CCND3 stability during the G1/S transition. Polyubiquitinated by the SCF(FBXL2) complex, leading to proteasomal degradation.

It is found in the nucleus. The protein resides in the cytoplasm. Its function is as follows. Regulatory component of the cyclin D3-CDK4 (DC) complex that phosphorylates and inhibits members of the retinoblastoma (RB) protein family including RB1 and regulates the cell-cycle during G(1)/S transition. Phosphorylation of RB1 allows dissociation of the transcription factor E2F from the RB/E2F complex and the subsequent transcription of E2F target genes which are responsible for the progression through the G(1) phase. Hypophosphorylates RB1 in early G(1) phase. Cyclin D-CDK4 complexes are major integrators of various mitogenenic and antimitogenic signals. Component of the ternary complex, cyclin D3/CDK4/CDKN1B, required for nuclear translocation and activity of the cyclin D-CDK4 complex. Shows transcriptional coactivator activity with ATF5 independently of CDK4. The sequence is that of G1/S-specific cyclin-D3 from Rattus norvegicus (Rat).